A 571-amino-acid polypeptide reads, in one-letter code: Proline--tRNA ligase (571 aa).

This sequence belongs to the class-II aminoacyl-tRNA synthetase family. ProS type 1 subfamily. As to quaternary structure, homodimer.

The protein resides in the cytoplasm. It catalyses the reaction tRNA(Pro) + L-proline + ATP = L-prolyl-tRNA(Pro) + AMP + diphosphate. Functionally, catalyzes the attachment of proline to tRNA(Pro) in a two-step reaction: proline is first activated by ATP to form Pro-AMP and then transferred to the acceptor end of tRNA(Pro). As ProRS can inadvertently accommodate and process non-cognate amino acids such as alanine and cysteine, to avoid such errors it has two additional distinct editing activities against alanine. One activity is designated as 'pretransfer' editing and involves the tRNA(Pro)-independent hydrolysis of activated Ala-AMP. The other activity is designated 'posttransfer' editing and involves deacylation of mischarged Ala-tRNA(Pro). The misacylated Cys-tRNA(Pro) is not edited by ProRS. This chain is Proline--tRNA ligase, found in Histophilus somni (strain 2336) (Haemophilus somnus).